Here is a 1100-residue protein sequence, read N- to C-terminus: MAIAHFSASIVSRGDGRSVVLSAAYQHCAKMEYEREARTIDYTRKQGLVHQEFILPADAPKWVRALIADCSVAGASEAFWNKVEAFEKRSDAQLARDLTIALPRELTSEQNIALVRDFVEKHILGKGMVADWVYHDNPGNPHIHLMTTLRPLTEDGFGAKKVAVIGEDGQLVRTKSGKILYELWAGSTDDFNVVRDGWFERLNHHLTLGGIDLKIDGRSYEKQGIDLEPTIHLGVGAKAISRKAEQQGVRPELERIELNEERRSENTRRILKNPAIVLDLIMREKSVFDERDVAKVLHRYVDDPAVFQQLMLRIILNPEVLRLQRDTIEFATGEKVPARYSTRAMIRLEATMARQAMWLSDKETHAVSTAVLAATFGRHGRLSEEQKAAIECIAGPARIAAVVGRAGAGKTTMMKAAREAWELAGYRVVGGALAGKASEGLDKEAGIESRTLSSWELRWNRGRDVLDNKTVFVMDEAGMVASKQMAGFVDAVVRAGAKIVLVGDPEQLQPIEAGAAFRAIVDRIGYAELETIYRQREDWMRKASLDLARGNVEKALALYNANARIVGERLKAEAVERLIADWNRDYDQTKTTLILAHLRRDVRMLNVMAREKLVERGIVGEGHVFRTADGERRFHAGDQIVFLKNETLLGVKNGMIGHVVEAVPNRIVAVVGDRDHRRHVVVEQRFYSNLDHGYATTIHKSQGATVDRVKVLASLSLDRHLTYVAMTRHREDLQLYYGCRSFAFNGGLAKVLSRKNAKETTLDYERGKLYREALRFAENRGLHIMQVARTMLRDRLDWTLRQKTKVSDLVHRLRALGERLGLDQSPKTQTMKEAAPMVTGIKTFSGSVADTVGDKLGADPTLKQQWEEVSARFRYVFADPETAFRAVNFDTVLADKEAAKAVLQKLEAEPASIGALKGKTGILASKTEREARRVAEVNVPALKRDLEQYLRMRETATLRIVTEEQALRQRVSIDIPALSPAARVVLERVRDAIDRNDLPAALGYALSNRETKLEIDGFNQAVTERFGERTLLSNVAREPSGKLYEKLSDGMRPEQKEQLKQAWPIMRTAQQLAAHERTVQSLKQAEELRQTLRQAPVLKQ.

404 to 411 (GRAGAGKT) is a binding site for ATP.

The protein belongs to the MobA/MobL family.

The sequence is that of Conjugal transfer protein TraA (traA) from Agrobacterium fabrum (strain C58 / ATCC 33970) (Agrobacterium tumefaciens (strain C58)).